A 2153-amino-acid polypeptide reads, in one-letter code: Genome polyprotein (2153 aa).

Gly2 carries N-myristoyl glycine; by host lipidation. Positions 213–240 (HTHPGQSGHQIRGPSQSNDRSGGKPDED) are disordered. Over residues 216–232 (PGQSGHQIRGPSQSNDR) the composition is skewed to polar residues. The tract at residues 565-584 (ELQNNDDPVENFVESTLKEV) is amphipathic alpha-helix. Active-site for protease 2A activity residues include His864 and Asp880. Zn(2+) is bound by residues Cys897 and Cys899. The active-site For protease 2A activity is Cys951. Cys957 and His959 together coordinate Zn(2+). The tract at residues 1088 to 1158 (SDSWLRKFTE…GFSSASSEAQ (71 aa)) is membrane-binding. Residues 1088–1224 (SDSWLRKFTE…NPGCGKSLVT (137 aa)) are oligomerization. Positions 1109–1113 (SIKIG) are RNA-binding. One can recognise an SF3 helicase domain in the interval 1187–1346 (TKIQKDLKQL…FRNTTGLLDV (160 aa)). Residue 1214–1221 (GNPGCGKS) coordinates ATP. The Zn(2+) site is built by Cys1353, Cys1365, and Cys1370. A C4-type; degenerate zinc finger spans residues 1353 to 1370 (CTGCPKPAHYKTCCPLLC). Residues 1397 to 1404 (ENATRKKV) are RNA-binding. The oligomerization stretch occupies residues 1408 to 1413 (LDAIFQ). Residues 1460 to 1480 (VHYMLNCLGSLIIILGTVYAL) lie within the membrane without spanning it. An O-(5'-phospho-RNA)-tyrosine modification is found at Tyr1491. The Peptidase C3 domain occupies 1511 to 1689 (GPEHEFVRAL…YGAALLRKYF (179 aa)). Active-site for protease 3C activity residues include His1550, Glu1581, and Cys1657. The region spanning 1920-2033 (GELLAFDYTN…SYPFELDPME (114 aa)) is the RdRp catalytic domain. Mg(2+) is bound by residues Asp1926 and Asp2019.

Belongs to the picornaviruses polyprotein family. In terms of assembly, interacts with capsid protein VP1 and capsid protein VP3 to form heterotrimeric protomers. As to quaternary structure, interacts with capsid protein VP0, and capsid protein VP3 to form heterotrimeric protomers. Five protomers subsequently associate to form pentamers which serve as building blocks for the capsid. Interacts with capsid protein VP2, capsid protein VP3 and capsid protein VP4 following cleavage of capsid protein VP0. Interacts (via C-terminus) with capsid protein VP4 (via C-terminus). Interacts with host CDHR3 (via N-terminus); this interaction occurs near each threefold vertex of the capsid and allows the virus attachment and entry into the host cell. Interacts with capsid protein VP1 and capsid protein VP3 in the mature capsid. Interacts with host CDHR3 (via N-terminus); this interaction occurs near each threefold vertex of the capsid and allows the virus attachment and entry into the host cell. In terms of assembly, interacts with capsid protein VP0 and capsid protein VP1 to form heterotrimeric protomers. Five protomers subsequently associate to form pentamers which serve as building blocks for the capsid. Interacts with capsid protein VP4 in the mature capsid. Interacts with protein 2C; this interaction may be important for virion morphogenesis. Interacts with host CDHR3 (via N-terminus); this interaction occurs near each threefold vertex of the capsid and allows the virus attachment and entry into the host cell. As to quaternary structure, interacts (via C-terminus) with capsid protein VP1 (via C-terminus). Interacts with capsid protein VP3. Homodimer. In terms of assembly, homohexamer; forms a hexameric ring structure with 6-fold symmetry characteristic of AAA+ ATPases. Interacts (via N-terminus) with host RTN3 (via reticulon domain); this interaction is important for viral replication. Interacts with capsid protein VP3; this interaction may be important for virion morphogenesis. As to quaternary structure, interacts with protein 3CD. Homodimer. Interacts with host GBF1. Interacts (via GOLD domain) with host ACBD3 (via GOLD domain); this interaction allows the formation of a viral protein 3A/ACBD3 heterotetramer with a 2:2 stoichiometry, which will stimulate the recruitment of host PI4KB in order to synthesize PI4P at the viral RNA replication sites. In terms of assembly, interacts with RNA-directed RNA polymerase. As to quaternary structure, interacts with protein 3AB and with RNA-directed RNA polymerase. Interacts with Viral protein genome-linked and with protein 3CD. Mg(2+) is required as a cofactor. Post-translationally, specific enzymatic cleavages in vivo by the viral proteases yield processing intermediates and the mature proteins. Myristoylation is required for the formation of pentamers during virus assembly. Further assembly of 12 pentamers and a molecule of genomic RNA generates the provirion. In terms of processing, during virion maturation, immature virions are rendered infectious following cleavage of VP0 into VP4 and VP2. This maturation seems to be an autocatalytic event triggered by the presence of RNA in the capsid and it is followed by a conformational change infectious virion. Post-translationally, myristoylation is required during RNA encapsidation and formation of the mature virus particle. VPg is uridylylated by the polymerase into VPg-pUpU. This acts as a nucleotide-peptide primer for the genomic RNA replication.

It localises to the virion. It is found in the host cytoplasm. The protein resides in the host cytoplasmic vesicle membrane. Its subcellular location is the host nucleus. The catalysed reaction is a ribonucleoside 5'-triphosphate + H2O = a ribonucleoside 5'-diphosphate + phosphate + H(+). The enzyme catalyses Selective cleavage of Gln-|-Gly bond in the poliovirus polyprotein. In other picornavirus reactions Glu may be substituted for Gln, and Ser or Thr for Gly.. It catalyses the reaction Selective cleavage of Tyr-|-Gly bond in the picornavirus polyprotein.. It carries out the reaction RNA(n) + a ribonucleoside 5'-triphosphate = RNA(n+1) + diphosphate. Replication or transcription is subject to high level of random mutations by the nucleotide analog ribavirin. Forms an icosahedral capsid of pseudo T=3 symmetry with capsid proteins VP2 and VP3. The capsid is 300 Angstroms in diameter, composed of 60 copies of each capsid protein and enclosing the viral positive strand RNA genome. Capsid protein VP1 mainly forms the vertices of the capsid. The VP1 C-termini form 60 dominant spike-like protrusions on the surface of the virion. Capsid protein VP1 interacts with host cell receptor CDHR3 to provide virion attachment to target host cells. This attachment induces virion internalization. Tyrosine kinases are probably involved in the entry process. After binding to its receptor, the capsid undergoes conformational changes. Capsid protein VP1 N-terminus (that contains an amphipathic alpha-helix) and capsid protein VP4 are externalized. Together, they shape a pore in the host membrane through which viral genome is translocated to host cell cytoplasm. Its function is as follows. Forms an icosahedral capsid of pseudo T=3 symmetry with capsid proteins VP2 and VP3. The capsid is 300 Angstroms in diameter, composed of 60 copies of each capsid protein and enclosing the viral positive strand RNA genome. Functionally, lies on the inner surface of the capsid shell. After binding to the host receptor, the capsid undergoes conformational changes. Capsid protein VP4 is released, Capsid protein VP1 N-terminus is externalized, and together, they shape a pore in the host membrane through which the viral genome is translocated into the host cell cytoplasm. In terms of biological role, component of immature procapsids, which is cleaved into capsid proteins VP4 and VP2 after maturation. Allows the capsid to remain inactive before the maturation step. Cysteine protease that cleaves viral polyprotein and specific host proteins. It is responsible for the autocatalytic cleavage between the P1 and P2 regions, which is the first cleavage occurring in the polyprotein. Also cleaves the host translation initiation factor EIF4G1, in order to shut down the capped cellular mRNA translation. Inhibits the host nucleus-cytoplasm protein and RNA trafficking by cleaving host members of the nuclear pores. Counteracts stress granule formation probably by antagonizing its assembly or promoting its dissassembly. Its function is as follows. Plays an essential role in the virus replication cycle by acting as a viroporin. Creates a pore in the host endoplasmic reticulum and as a consequence releases Ca2+ in the cytoplasm of infected cell. In turn, high levels of cytoplasmic calcium may trigger membrane trafficking and transport of viral ER-associated proteins to viroplasms, sites of viral genome replication. Functionally, induces and associates with structural rearrangements of intracellular membranes. Displays RNA-binding, nucleotide binding and NTPase activities. May play a role in virion morphogenesis and viral RNA encapsidation by interacting with the capsid protein VP3. In terms of biological role, localizes the viral replication complex to the surface of membranous vesicles. Together with protein 3CD binds the Cis-Active RNA Element (CRE) which is involved in RNA synthesis initiation. Acts as a cofactor to stimulate the activity of 3D polymerase, maybe through a nucleid acid chaperone activity. Localizes the viral replication complex to the surface of membranous vesicles. It inhibits host cell endoplasmic reticulum-to-Golgi apparatus transport and causes the disassembly of the Golgi complex, possibly through GBF1 interaction. This would result in depletion of MHC, trail receptors and IFN receptors at the host cell surface. Plays an essential role in viral RNA replication by recruiting ACBD3 and PI4KB at the viral replication sites, thereby allowing the formation of the rearranged membranous structures where viral replication takes place. Its function is as follows. Acts as a primer for viral RNA replication and remains covalently bound to viral genomic RNA. VPg is uridylylated prior to priming replication into VPg-pUpU. The oriI viral genomic sequence may act as a template for this. The VPg-pUpU is then used as primer on the genomic RNA poly(A) by the RNA-dependent RNA polymerase to replicate the viral genome. During genome replication, the VPg-RNA linkage is removed by the host TDP2, thereby accelerating replication. During the late stage of the replication cycle, host TDP2 is excluded from sites of viral RNA synthesis and encapsidation, allowing for the generation of progeny virions. Functionally, involved in the viral replication complex and viral polypeptide maturation. It exhibits protease activity with a specificity and catalytic efficiency that is different from protease 3C. Protein 3CD lacks polymerase activity. Protein 3CD binds to the 5'UTR of the viral genome. In terms of biological role, major viral protease that mediates proteolytic processing of the polyprotein. Cleaves host EIF5B, contributing to host translation shutoff. Also cleaves host PABPC1, contributing to host translation shutoff. Replicates the viral genomic RNA on the surface of intracellular membranes. May form linear arrays of subunits that propagate along a strong head-to-tail interaction called interface-I. Covalently attaches UMP to a tyrosine of VPg, which is used to prime RNA synthesis. The positive stranded RNA genome is first replicated at virus induced membranous vesicles, creating a dsRNA genomic replication form. This dsRNA is then used as template to synthesize positive stranded RNA genomes. ss(+)RNA genomes are either translated, replicated or encapsidated. This is Genome polyprotein from Homo sapiens (Human).